The chain runs to 234 residues: uncharacterized protein (234 aa).

The HTH tetR-type domain occupies 24–83 (VERRNELVDGTIEAIRRHGRFLSMDEIAAEIGVSKTVLYRYFVDKNDLTTAVMMRFTQTT). Residues 46–65 (SMDEIAAEIGVSKTVLYRYF) constitute a DNA-binding region (H-T-H motif).

This is an uncharacterized protein from Mycobacterium tuberculosis (strain CDC 1551 / Oshkosh).